The chain runs to 525 residues: GMP synthase [glutamine-hydrolyzing] (525 aa).

The Glutamine amidotransferase type-1 domain occupies 9–207; the sequence is RILILDFGSQ…VRDICECEAL (199 aa). The active-site Nucleophile is the cysteine 86. Catalysis depends on residues histidine 181 and glutamate 183. The GMPS ATP-PPase domain maps to 208–400; that stretch reads WTPAKIIDDA…LGLPYDMLYR (193 aa). 235 to 241 is a binding site for ATP; that stretch reads SGGVDSS.

In terms of assembly, homodimer.

The enzyme catalyses XMP + L-glutamine + ATP + H2O = GMP + L-glutamate + AMP + diphosphate + 2 H(+). It functions in the pathway purine metabolism; GMP biosynthesis; GMP from XMP (L-Gln route): step 1/1. Catalyzes the synthesis of GMP from XMP. The sequence is that of GMP synthase [glutamine-hydrolyzing] from Cronobacter sakazakii (strain ATCC BAA-894) (Enterobacter sakazakii).